The chain runs to 160 residues: SsrA-binding protein (160 aa).

This sequence belongs to the SmpB family.

The protein localises to the cytoplasm. In terms of biological role, required for rescue of stalled ribosomes mediated by trans-translation. Binds to transfer-messenger RNA (tmRNA), required for stable association of tmRNA with ribosomes. tmRNA and SmpB together mimic tRNA shape, replacing the anticodon stem-loop with SmpB. tmRNA is encoded by the ssrA gene; the 2 termini fold to resemble tRNA(Ala) and it encodes a 'tag peptide', a short internal open reading frame. During trans-translation Ala-aminoacylated tmRNA acts like a tRNA, entering the A-site of stalled ribosomes, displacing the stalled mRNA. The ribosome then switches to translate the ORF on the tmRNA; the nascent peptide is terminated with the 'tag peptide' encoded by the tmRNA and targeted for degradation. The ribosome is freed to recommence translation, which seems to be the essential function of trans-translation. The polypeptide is SsrA-binding protein (Pectobacterium carotovorum subsp. carotovorum (strain PC1)).